Here is a 325-residue protein sequence, read N- to C-terminus: Beta-ketoacyl-[acyl-carrier-protein] synthase III (325 aa).

Residues Cys119 and His252 contribute to the active site. The segment at 253 to 257 (QANIR) is ACP-binding. Asn282 is a catalytic residue.

It belongs to the thiolase-like superfamily. FabH family. As to quaternary structure, homodimer.

It is found in the cytoplasm. The catalysed reaction is malonyl-[ACP] + acetyl-CoA + H(+) = 3-oxobutanoyl-[ACP] + CO2 + CoA. The protein operates within lipid metabolism; fatty acid biosynthesis. Its function is as follows. Catalyzes the condensation reaction of fatty acid synthesis by the addition to an acyl acceptor of two carbons from malonyl-ACP. Catalyzes the first condensation reaction which initiates fatty acid synthesis and may therefore play a role in governing the total rate of fatty acid production. Possesses both acetoacetyl-ACP synthase and acetyl transacylase activities. Its substrate specificity determines the biosynthesis of branched-chain and/or straight-chain of fatty acids. The protein is Beta-ketoacyl-[acyl-carrier-protein] synthase III of Acidovorax ebreus (strain TPSY) (Diaphorobacter sp. (strain TPSY)).